A 321-amino-acid polypeptide reads, in one-letter code: Ribosomal RNA small subunit methyltransferase H (321 aa).

S-adenosyl-L-methionine contacts are provided by residues 42-44 (GGH), D62, F86, D107, and Q114.

Belongs to the methyltransferase superfamily. RsmH family.

The protein resides in the cytoplasm. It catalyses the reaction cytidine(1402) in 16S rRNA + S-adenosyl-L-methionine = N(4)-methylcytidine(1402) in 16S rRNA + S-adenosyl-L-homocysteine + H(+). In terms of biological role, specifically methylates the N4 position of cytidine in position 1402 (C1402) of 16S rRNA. This is Ribosomal RNA small subunit methyltransferase H from Herminiimonas arsenicoxydans.